We begin with the raw amino-acid sequence, 547 residues long: Chaperonin GroEL 1 (547 aa).

ATP-binding positions include 30-33, lysine 51, 87-91, glycine 415, and aspartate 496; these read TLGP and DGTTT.

It belongs to the chaperonin (HSP60) family. As to quaternary structure, forms a cylinder of 14 subunits composed of two heptameric rings stacked back-to-back. Interacts with the co-chaperonin GroES.

Its subcellular location is the cytoplasm. It carries out the reaction ATP + H2O + a folded polypeptide = ADP + phosphate + an unfolded polypeptide.. Its function is as follows. Together with its co-chaperonin GroES, plays an essential role in assisting protein folding. The GroEL-GroES system forms a nano-cage that allows encapsulation of the non-native substrate proteins and provides a physical environment optimized to promote and accelerate protein folding. In Rhodopseudomonas palustris (strain ATCC BAA-98 / CGA009), this protein is Chaperonin GroEL 1.